The following is a 318-amino-acid chain: MDYTNNQLHIIYGDATLGVNGKDFQYIFSYERGGLESLKVHGKEWLYRVPTPTFWRATTDNDRGSGFNLKAAQWLGADMFTKCTDIHLKVDRHDFAELPIAPFNNKFSNHEYAKSAEISFTYQTLTTPATNAKIIYNIDDVGHIKVTMRYYGKKGLPPLPVIGIRLIMPTAATGFDYEGLSGETYPDRMAGAKEGKFHIDGLPVTEYLVPQENGMHMQTKKLTINRETTQNNVDRTNEKFSLSIQQAEKPFNFSCLPYTAEELENATHIEELPLVRRTVLVIAGAVRGVGGIDSWGTDVESAYHINPELDHEFSFILN.

This sequence belongs to the bacterial beta-galactosidase small subunit family. As to quaternary structure, heterodimer of a large (LacL) and a small subunit (LacM).

The enzyme catalyses Hydrolysis of terminal non-reducing beta-D-galactose residues in beta-D-galactosides.. Component of a beta-galactosidase. In Lactobacillus helveticus (Lactobacillus suntoryeus), this protein is Beta-galactosidase small subunit.